A 190-amino-acid chain; its full sequence is Elongation factor P-like protein (190 aa).

This sequence belongs to the elongation factor P family.

This is Elongation factor P-like protein from Serratia proteamaculans (strain 568).